The primary structure comprises 562 residues: Dihydroxy-acid dehydratase 2 (562 aa).

[2Fe-2S] cluster is bound at residue Cys-50. Asp-82 contributes to the Mg(2+) binding site. Cys-123 provides a ligand contact to [2Fe-2S] cluster. Mg(2+) is bound by residues Asp-124, Lys-125, and Glu-447. The residue at position 125 (Lys-125) is an N6-carboxylysine. Catalysis depends on Ser-473, which acts as the Proton acceptor.

The protein belongs to the IlvD/Edd family. In terms of assembly, homodimer. It depends on [2Fe-2S] cluster as a cofactor. Mg(2+) is required as a cofactor.

It catalyses the reaction (2R)-2,3-dihydroxy-3-methylbutanoate = 3-methyl-2-oxobutanoate + H2O. The catalysed reaction is (2R,3R)-2,3-dihydroxy-3-methylpentanoate = (S)-3-methyl-2-oxopentanoate + H2O. It functions in the pathway amino-acid biosynthesis; L-isoleucine biosynthesis; L-isoleucine from 2-oxobutanoate: step 3/4. The protein operates within amino-acid biosynthesis; L-valine biosynthesis; L-valine from pyruvate: step 3/4. Functionally, functions in the biosynthesis of branched-chain amino acids. Catalyzes the dehydration of (2R,3R)-2,3-dihydroxy-3-methylpentanoate (2,3-dihydroxy-3-methylvalerate) into 2-oxo-3-methylpentanoate (2-oxo-3-methylvalerate) and of (2R)-2,3-dihydroxy-3-methylbutanoate (2,3-dihydroxyisovalerate) into 2-oxo-3-methylbutanoate (2-oxoisovalerate), the penultimate precursor to L-isoleucine and L-valine, respectively. The polypeptide is Dihydroxy-acid dehydratase 2 (Bordetella pertussis (strain Tohama I / ATCC BAA-589 / NCTC 13251)).